Here is a 1066-residue protein sequence, read N- to C-terminus: DNA-directed RNA polymerase subunit beta (1066 aa).

This sequence belongs to the RNA polymerase beta chain family. As to quaternary structure, in plastids the minimal PEP RNA polymerase catalytic core is composed of four subunits: alpha, beta, beta', and beta''. When a (nuclear-encoded) sigma factor is associated with the core the holoenzyme is formed, which can initiate transcription.

Its subcellular location is the plastid. It localises to the chloroplast. The catalysed reaction is RNA(n) + a ribonucleoside 5'-triphosphate = RNA(n+1) + diphosphate. DNA-dependent RNA polymerase catalyzes the transcription of DNA into RNA using the four ribonucleoside triphosphates as substrates. This Psilotum nudum (Whisk fern) protein is DNA-directed RNA polymerase subunit beta.